Reading from the N-terminus, the 335-residue chain is Cathepsin B (335 aa).

An N-terminal signal peptide occupies residues 1–19 (MWQLLATLSCLLVLTSARS). Residues 20 to 79 (SLHFPPLSDEMVNYVNKQNTTWKAGHNFYNVDLSYVKKLCGAILGGPKLPQRDAFAADMV) constitute a propeptide, activation peptide. 6 cysteine pairs are disulfide-bonded: cysteine 93/cysteine 122, cysteine 105/cysteine 150, cysteine 141/cysteine 207, cysteine 142/cysteine 146, cysteine 179/cysteine 211, and cysteine 187/cysteine 198. Residue cysteine 108 is part of the active site. Residue asparagine 192 is glycosylated (N-linked (GlcNAc...) asparagine). Lysine 220 is subject to N6-acetyllysine. Active-site residues include histidine 278 and asparagine 298. Residues 333-335 (HQH) constitute a propeptide that is removed on maturation.

Belongs to the peptidase C1 family. In terms of assembly, dimer of a heavy chain and a light chain cross-linked by a disulfide bond. Interacts with SRPX2. Directly interacts with SHKBP1.

It is found in the lysosome. It localises to the melanosome. The protein localises to the secreted. Its subcellular location is the extracellular space. The protein resides in the apical cell membrane. It carries out the reaction Hydrolysis of proteins with broad specificity for peptide bonds. Preferentially cleaves -Arg-Arg-|-Xaa bonds in small molecule substrates (thus differing from cathepsin L). In addition to being an endopeptidase, shows peptidyl-dipeptidase activity, liberating C-terminal dipeptides.. Functionally, thiol protease which is believed to participate in intracellular degradation and turnover of proteins. Cleaves matrix extracellular phosphoglycoprotein MEPE. Involved in the solubilization of cross-linked TG/thyroglobulin in the thyroid follicle lumen. Has also been implicated in tumor invasion and metastasis. The protein is Cathepsin B (CTSB) of Ovis aries (Sheep).